Here is a 90-residue protein sequence, read N- to C-terminus: Small ribosomal subunit protein bS16 (90 aa).

Belongs to the bacterial ribosomal protein bS16 family.

This Lactobacillus helveticus (strain DPC 4571) protein is Small ribosomal subunit protein bS16.